A 173-amino-acid chain; its full sequence is MVVGWSLLGWALSWLAVATVVVSAIVTVDKEALTRECDPDTPMVVPNFKANWFKATEYCHYLDRNLVIVTSAEKQEVITKVLEGTDKFGDNSFWVGGSDLAELGNFHWHSTGTRIVWHNWSELVPMPTADDPTRKDDRCVLLSNNTEMGGFKWIVVNCWDEYYFVCEKGVFAK.

Positions 1 to 24 are cleaved as a signal peptide; that stretch reads MVVGWSLLGWALSWLAVATVVVSA. Residues 51-167 enclose the C-type lectin domain; that stretch reads NWFKATEYCH…CWDEYYFVCE (117 aa). 2 cysteine pairs are disulfide-bonded: Cys59–Cys166 and Cys139–Cys158. Residues Asn119 and Asn144 are each glycosylated (N-linked (GlcNAc...) asparagine).

As to quaternary structure, interacts with putative receptor-type tyrosine-protein phosphatase mosPTP-1; the interaction may mediate the recruitment of Japanese encephalitis virus particles in complex with C-type lectin mosGCTL-7 to the cell surface.

Its subcellular location is the secreted. In terms of biological role, carbohydrate-binding protein. Functionally, (Microbial infection) Facilitates Japanese encephalitis virus infection in mosquitoes. This Culex quinquefasciatus (Southern house mosquito) protein is C-type lectin mosGCTL-7.